Reading from the N-terminus, the 649-residue chain is Protein mitoshell (649 aa).

Residues 167-176 (LRSEARKPRP) are compositionally biased toward basic and acidic residues. Disordered stretches follow at residues 167–193 (LRSE…ESGA), 389–414 (HGPS…EPTS), and 485–512 (ALPS…VRSY). The span at 177–191 (ESVVPEESSISSLES) shows a compositional bias: low complexity. Composition is skewed to polar residues over residues 393–414 (AFST…EPTS) and 485–503 (ALPS…SPQS).

Functionally, required for male meiotic cytokinesis through its involvement in the regulation of mitochondrial aggregation and fusion, astral spindle assembly and contractile ring formation. This chain is Protein mitoshell, found in Drosophila melanogaster (Fruit fly).